Reading from the N-terminus, the 271-residue chain is 2-aminophenol 1,6-dioxygenase subunit alpha (271 aa).

It belongs to the LigB/MhpB extradiol dioxygenase family. As to quaternary structure, the APD complex is a heterotetramer of 2 alpha (CnbCa) and 2 beta (CnbCb) subunits.

It participates in xenobiotic degradation; nitrobenzene degradation. It functions in the pathway xenobiotic degradation; 4-chloronitrobenzene degradation. Component of the 2-aminophenol 1,6-dioxygenase (APD) complex that catalyzes the ring fission of 2-aminophenol to produce 2-aminomuconic semialdehyde. CnbCa may have a role in the stability of the complex. The complex is also active on other substrates such as 2-amino-5-chlorophenol (68% activity), protocatechuate (33% activity) and catechol (5% activity). Both 2-aminophenol and 2-amino-5-cholorophenol are likely native substrates for this dioxygenase which is involved in the reductive degradation pathway of both nitrobenzene (NB) and 4-chloronitrobenzene (4-CNB), allowing C.testosteroni strain CNB-1 to grow on these compounds as sole source of carbon, nitrogen, and energy. The sequence is that of 2-aminophenol 1,6-dioxygenase subunit alpha from Comamonas testosteroni (Pseudomonas testosteroni).